A 158-amino-acid chain; its full sequence is Ribonucleases P/MRP protein subunit POP6 (158 aa).

Residues 51 to 71 adopt a coiled-coil conformation; that stretch reads KNDNIKKSVNKLDKQINMADR.

In terms of assembly, component of nuclear RNase P and RNase MRP complexes. RNase P consists of an RNA moiety and at least 9 protein subunits including POP1, POP3, POP4, POP5, POP6, POP7, POP8, RPP1 and RPR2. RNase MRP complex consists of an RNA moiety and at least 10 protein subunits including POP1, POP3, POP4, POP5, POP6, POP7, POP8, RMP1, RPP1 and SNM1, many of which are shared with the RNase P complex.

It localises to the nucleus. The catalysed reaction is Endonucleolytic cleavage of RNA, removing 5'-extranucleotides from tRNA precursor.. Its function is as follows. Component of ribonuclease P, a protein complex that generates mature tRNA molecules by cleaving their 5'-ends. Also a component of RNase MRP, which cleaves pre-rRNA sequences. In Saccharomyces cerevisiae (strain ATCC 204508 / S288c) (Baker's yeast), this protein is Ribonucleases P/MRP protein subunit POP6 (POP6).